We begin with the raw amino-acid sequence, 1368 residues long: Kinesin-like protein KIF24 (1368 aa).

Positions 1 to 64 (MASWLYECLC…FQLIKIIKIM (64 aa)) constitute an SAM domain. The interval 89–112 (ELRSGPRRQLNFDSPADNKDRNAS) is disordered. 2 positions are modified to phosphoserine: serine 102 and serine 112. The region spanning 223–546 (KIRVCVRKRP…LRYADRVKEL (324 aa)) is the Kinesin motor domain. 313-320 (GQTGAGKT) is a binding site for ATP. Position 478 is a phosphoserine (serine 478). The segment at 478–709 (SLLALKECIR…STKCKKVQTV (232 aa)) is interaction with MPHOSPH9. Residues 557–576 (TSRNRTSGNSSPKRIQSSPG) show a composition bias toward polar residues. 2 disordered regions span residues 557–584 (TSRN…DKCS) and 602–639 (GSTR…SPSQ). Residue serine 584 is modified to Phosphoserine. Position 621 is a phosphothreonine; by NEK2 (threonine 621). The residue at position 622 (serine 622) is a Phosphoserine; by NEK2. The residue at position 646 (serine 646) is a Phosphoserine. Disordered stretches follow at residues 651–670 (TVRS…PLCS), 729–753 (HRAE…WTNI), 792–849 (QYRP…NTLE), 864–938 (GPEK…LAEK), and 952–984 (RGGG…EEDG). Residues 819-830 (QVEELDDSDFSE) are compositionally biased toward acidic residues. 2 positions are modified to phosphoserine: serine 826 and serine 829. Composition is skewed to polar residues over residues 839–849 (QRATKQRNTLE) and 871–881 (ERQQSLFSSPR). A compositionally biased stretch (basic and acidic residues) spans 882 to 906 (TGDKKDLTKSWVDSRDPINHRRAAL). Serine 1012 is subject to Phosphoserine. Disordered regions lie at residues 1054–1073 (MSLL…QLVQ) and 1086–1148 (GGPV…SREA). The span at 1106 to 1119 (SSATRHLWLSSSPP) shows a compositional bias: polar residues. Over residues 1138 to 1148 (HPADKLPSREA) the composition is skewed to basic and acidic residues.

It belongs to the TRAFAC class myosin-kinesin ATPase superfamily. Kinesin family. In terms of assembly, interacts with CCP110, CEP97, TALPID3. Interacts with MPHOSPH9.

The protein resides in the cytoplasm. It is found in the cytoskeleton. The protein localises to the microtubule organizing center. It localises to the centrosome. Its subcellular location is the centriole. Microtubule-dependent motor protein that acts as a negative regulator of ciliogenesis by mediating recruitment of CCP110 to mother centriole in cycling cells, leading to restrict nucleation of cilia at centrioles. Mediates depolymerization of microtubules of centriolar origin, possibly to suppress aberrant cilia formation. Following activation by NEK2 involved in disassembly of primary cilium during G2/M phase but does not disassemble fully formed ciliary axonemes. As cilium assembly and disassembly is proposed to coexist in a dynamic equilibrium may suppress nascent cilium assembly and, potentially, ciliar re-assembly in cells that have already disassembled their cilia ensuring the completion of cilium removal in the later stages of the cell cycle. Plays an important role in recruiting MPHOSPH9, a negative regulator of cilia formation to the distal end of mother centriole. This is Kinesin-like protein KIF24 (KIF24) from Homo sapiens (Human).